The chain runs to 354 residues: Protein-glutamate methylesterase/protein-glutamine glutaminase (354 aa).

The 118-residue stretch at 7 to 124 folds into the Response regulatory domain; sequence KVLCVDDSAL…REGMLEYTEM (118 aa). 4-aspartylphosphate is present on aspartate 58. The region spanning 156 to 348 is the CheB-type methylesterase domain; it reads LLSSEKVIII…AALMKRAEAS (193 aa). Active-site residues include serine 168, histidine 194, and aspartate 290.

Belongs to the CheB family. In terms of processing, phosphorylated by CheA. Phosphorylation of the N-terminal regulatory domain activates the methylesterase activity.

The protein localises to the cytoplasm. The catalysed reaction is [protein]-L-glutamate 5-O-methyl ester + H2O = L-glutamyl-[protein] + methanol + H(+). It carries out the reaction L-glutaminyl-[protein] + H2O = L-glutamyl-[protein] + NH4(+). Its function is as follows. Involved in chemotaxis. Part of a chemotaxis signal transduction system that modulates chemotaxis in response to various stimuli. Catalyzes the demethylation of specific methylglutamate residues introduced into the chemoreceptors (methyl-accepting chemotaxis proteins or MCP) by CheR. Also mediates the irreversible deamidation of specific glutamine residues to glutamic acid. The protein is Protein-glutamate methylesterase/protein-glutamine glutaminase of Chromohalobacter salexigens (strain ATCC BAA-138 / DSM 3043 / CIP 106854 / NCIMB 13768 / 1H11).